The following is a 169-amino-acid chain: Succinate dehydrogenase cytochrome b560 subunit, mitochondrial (169 aa).

The transit peptide at 1-29 directs the protein to the mitochondrion; the sequence is MAALLLRHVGRHCLRAHLSPQLCIRNAVP. Residues 30 to 62 are Mitochondrial matrix-facing; that stretch reads LGTTAKEEMERFWNKNLGSNRPLSPHITIYRWS. A helical membrane pass occupies residues 63 to 92; the sequence is LPMAMSICHRGTGIALSAGVSLFGLSALLL. Residues 93–112 lie on the Mitochondrial intermembrane side of the membrane; it reads PGNFESHLELVKSLCLGPTL. A helical membrane pass occupies residues 113–137; it reads IYTAKFGIVFPLMYHTWNGIRHLIW. Histidine 127 lines the heme b pocket. Over 138-144 the chain is Mitochondrial matrix; sequence DLGKGLT. A helical membrane pass occupies residues 145–166; the sequence is IPQLTQSGVVVLILTVLSSVGL. Topologically, residues 167–169 are mitochondrial intermembrane; the sequence is AAM.

Belongs to the cytochrome b560 family. Component of complex II composed of four subunits: the flavoprotein (FP) SDHA, iron-sulfur protein (IP) SDHB, and a cytochrome b560 composed of SDHC and SDHD. Heme b is required as a cofactor. As to expression, detected in heart muscle (at protein level).

The protein resides in the mitochondrion inner membrane. The protein operates within carbohydrate metabolism; tricarboxylic acid cycle. Functionally, membrane-anchoring subunit of succinate dehydrogenase (SDH) that is involved in complex II of the mitochondrial electron transport chain and is responsible for transferring electrons from succinate to ubiquinone (coenzyme Q). SDH also oxidizes malate to the non-canonical enol form of oxaloacetate, enol-oxaloacetate. Enol-oxaloacetate, which is a potent inhibitor of the succinate dehydrogenase activity, is further isomerized into keto-oxaloacetate. The protein is Succinate dehydrogenase cytochrome b560 subunit, mitochondrial (SDHC) of Sus scrofa (Pig).